A 144-amino-acid polypeptide reads, in one-letter code: 3-hydroxyacyl-[acyl-carrier-protein] dehydratase FabZ (144 aa).

Histidine 48 is an active-site residue.

Belongs to the thioester dehydratase family. FabZ subfamily.

It localises to the cytoplasm. It catalyses the reaction a (3R)-hydroxyacyl-[ACP] = a (2E)-enoyl-[ACP] + H2O. Its function is as follows. Involved in unsaturated fatty acids biosynthesis. Catalyzes the dehydration of short chain beta-hydroxyacyl-ACPs and long chain saturated and unsaturated beta-hydroxyacyl-ACPs. The sequence is that of 3-hydroxyacyl-[acyl-carrier-protein] dehydratase FabZ from Chloroflexus aggregans (strain MD-66 / DSM 9485).